Consider the following 501-residue polypeptide: E3 ubiquitin-protein ligase TRIM35 (501 aa).

Met-1 carries the N-acetylmethionine modification. Ser-8 carries the phosphoserine modification. The RING-type zinc finger occupies 21–61 (CAVCYDPFRDAVTLRCGHNFCRRCVSGCWEVQTTPSCPVCK). Residues 96–137 (RSPRPCRAHRAPLTLFCVEDKELLCCACQADARHQEHRVQPI) form a B box-type zinc finger. Cys-101, His-104, Cys-123, and His-129 together coordinate Zn(2+). Residues 209–252 (MKEESRKKHLLAEEKMKQLAEQTEALAREIERLQMEMKEDDMTF) adopt a coiled-coil conformation. Residues 284-495 (LESLQYRVWK…LRICHLRVSI (212 aa)) form the B30.2/SPRY domain.

In terms of assembly, interacts with PKM isoform M2, but not isoform M1; this interaction may compete with that between PKM and FGFR1, and hence reduces FGFR1-dependent tyrosine phosphorylation of PKM. Interacts with IRF7; this interaction promotes IRF7 proteasomal degradation. Interacts with TRAF3; this interaction promotes TRAF3 activation.

Its subcellular location is the cytoplasm. The protein localises to the nucleus. The catalysed reaction is S-ubiquitinyl-[E2 ubiquitin-conjugating enzyme]-L-cysteine + [acceptor protein]-L-lysine = [E2 ubiquitin-conjugating enzyme]-L-cysteine + N(6)-ubiquitinyl-[acceptor protein]-L-lysine.. Its pathway is protein modification; protein ubiquitination. E3 ubiquitin-protein ligase that participates in multiple biological processes including cell death, glucose metabolism, and in particular, the innate immune response. Mediates 'Lys-63'-linked polyubiquitination of TRAF3 thereby promoting type I interferon production via RIG-I signaling pathway. Can also catalyze 'Lys-48'-linked polyubiquitination and proteasomal degradation of viral proteins such as influenza virus PB2. Acts as a negative feedback regulator of TLR7- and TLR9-triggered signaling. Mechanistically, promotes the 'Lys-48'-linked ubiquitination of IRF7 and induces its degradation via a proteasome-dependent pathway. Reduces FGFR1-dependent tyrosine phosphorylation of PKM, inhibiting PKM-dependent lactate production, glucose metabolism, and cell growth. In Rattus norvegicus (Rat), this protein is E3 ubiquitin-protein ligase TRIM35 (Trim35).